The sequence spans 903 residues: Dynamin-like GTPase msp1, mitochondrial (903 aa).

Residues 1–78 constitute a mitochondrion transit peptide; the sequence is MGISWFLSRF…RFFSFSSISR (78 aa). The helical transmembrane segment at 86–103 threads the bilayer; sequence LPVAGFSLVAGGAAYIGA. Residues 167–188 are compositionally biased toward basic and acidic residues; the sequence is VLQAERAKEHRSNSNDKQKSSD. A disordered region spans residues 167–198; sequence VLQAERAKEHRSNSNDKQKSSDNDEDPNDTTV. Residues 198–214 traverse the membrane as a helical segment; it reads VGIGAALAASILSVDSV. The 272-residue stretch at 260–531 folds into the Dynamin-type G domain; that stretch reads AVTLPSIVVI…LEYTMSKNLQ (272 aa). The segment at 270–277 is G1 motif; it reads GSQSSGKS. Positions 273, 274, 275, 276, 277, 278, and 292 each coordinate GTP. Ser277 is a binding site for Mg(2+). Residues 296–298 are G2 motif; sequence VTR. 2 residues coordinate Mg(2+): Thr297 and Asp370. The tract at residues 370–373 is G3 motif; it reads DLPG. A G4 motif region spans residues 438 to 441; the sequence is TKMD. Positions 439, 441, and 468 each coordinate GTP. Residues 467–470 form a G5 motif region; sequence ISRI. Positions 691–805 are paddle region; the sequence is ATSEQVENCV…VLKSRACKHK (115 aa). Cys802 and Cys811 are joined by a disulfide. The region spanning 805–898 is the GED domain; sequence KEAKYTCPEI…KINSLVILEQ (94 aa).

It belongs to the TRAFAC class dynamin-like GTPase superfamily. Dynamin/Fzo/YdjA family. As to quaternary structure, homooligomer. Interacts with cdr1. In terms of processing, cleavage of the transit peptide by mitochondrial processing protease (MPP) produces a long integral membrane form of msp1 (l-msp1). Further processing by a rhomboid protease after the transmembrane regions produces a short peripheral membrane form of msp1 (s-msp1). Both isoforms are required for full activity.

It localises to the mitochondrion inner membrane. It is found in the mitochondrion intermembrane space. The catalysed reaction is GTP + H2O = GDP + phosphate + H(+). In terms of biological role, dynamin-related GTPase that is essential for normal mitochondrial morphology by mediating fusion of the mitochondrial inner membranes and maintaining respiratory chain function. Exists in two forms: the transmembrane, long form (Dynamin-like GTPase msp1, long form; l-msp1), which is tethered to the inner mitochondrial membrane, and the short soluble form (Dynamin-like GTPase msp1, short form; s-msp1), which results from proteolytic cleavage and localizes in the intermembrane space. Both forms (l-msp1 and s-msp1) cooperate to catalyze the fusion of the mitochondrial inner membrane. Its role in mitochondrial morphology is required for mitochondrial genome maintenance. Functionally, constitutes the transmembrane long form (l-msp1) that plays a central role in mitochondrial inner membrane fusion. L-msp1 and the soluble short form (s-msp1) form higher-order helical assemblies that coordinate the fusion of mitochondrial inner membranes. Inner membrane-anchored l-msp1 molecules initiate membrane remodeling by recruiting soluble s-msp1 to rapidly polymerize into a flexible cylindrical scaffold encaging the mitochondrial inner membrane. Once at the membrane surface, the formation of s-msp1 helices induce bilayer curvature. Msp1 dimerization through the paddle region, which inserts into cardiolipin-containing membrane, promotes GTP hydrolysis and the helical assembly of a flexible msp1 lattice on the membrane, which drives membrane curvature and mitochondrial fusion. Its function is as follows. Constitutes the soluble short form (s-msp1) generated by cleavage, which plays a central role in mitochondrial inner membrane fusion. The transmembrane long form (l-msp1) and the s-msp1 form higher-order helical assemblies that coordinate the fusion of mitochondrial inner membranes. Inner membrane-anchored l-msp1 molecules initiate membrane remodeling by recruiting soluble s-msp1 to rapidly polymerize into a flexible cylindrical scaffold encaging the mitochondrial inner membrane. Once at the membrane surface, the formation of s-msp1 helices induce bilayer curvature. Msp1 dimerization through the paddle region, which inserts into cardiolipin-containing membrane, promotes GTP hydrolysis and the helical assembly of a flexible msp1 lattice on the membrane, which drives membrane curvature and mitochondrial fusion. This chain is Dynamin-like GTPase msp1, mitochondrial, found in Schizosaccharomyces pombe (strain 972 / ATCC 24843) (Fission yeast).